Here is a 503-residue protein sequence, read N- to C-terminus: Transmembrane prolyl 4-hydroxylase (503 aa).

Residues 1-49 are disordered; sequence MAAAVATVQRPEAETVEEASNLQWPLPPEHRPSGAATRPGDSEDAPVRP. The Cytoplasmic portion of the chain corresponds to 1–61; it reads MAAAVATVQR…KPRGICSRAY (61 aa). The chain crosses the membrane as a helical; Signal-anchor for type II membrane protein span at residues 62–82; the sequence is FLVLMVFVHLYLGNVLALLLF. At 83-503 the chain is on the lumenal side; it reads VHYSNGDEST…RAYSDARVEL (421 aa). A disordered region spans residues 90–110; sequence ESTDPGPQRREQSPQPVPTLG. 2 EF-hand domains span residues 186–221 and 225–260; these read AMQV…GNGR and PENI…DFHK. Ca(2+)-binding residues include Asp199, Asn201, Asp203, Arg205, Glu210, Asp238, Asp240, Asp242, and Glu249. The 152-residue stretch at 310 to 461 folds into the Fe2OG dioxygenase domain; the sequence is EFSEPLQVVR…KWIANNWINV (152 aa). His329 and Asp331 together coordinate Fe cation. Asn349 and Asn369 each carry an N-linked (GlcNAc...) asparagine glycan. Glu375 is a binding site for Fe cation. Asn383 carries an N-linked (GlcNAc...) asparagine glycan. Lys452 serves as a coordination point for 2-oxoglutarate.

Homodimer. The cofactor is Fe(2+). L-ascorbate serves as cofactor. In terms of processing, glycosylated. Highest expression levels are detected in the eye and brain, especially in the retinal epithelium cells and cortical neurons. Also expressed in skeletal muscle, lung, heart, adrenal gland, kidney, prostate, thyroid and testis.

It is found in the endoplasmic reticulum membrane. It carries out the reaction L-prolyl-[hypoxia-inducible factor alpha subunit] + 2-oxoglutarate + O2 = trans-4-hydroxy-L-prolyl-[hypoxia-inducible factor alpha subunit] + succinate + CO2. In terms of biological role, catalyzes the post-translational formation of 4-hydroxyproline in hypoxia-inducible factor (HIF) alpha proteins. Hydroxylates HIF1A at 'Pro-402' and 'Pro-564'. May function as a cellular oxygen sensor and, under normoxic conditions, may target HIF through the hydroxylation for proteasomal degradation via the von Hippel-Lindau ubiquitination complex. This chain is Transmembrane prolyl 4-hydroxylase (P4htm), found in Mus musculus (Mouse).